Here is a 473-residue protein sequence, read N- to C-terminus: UTP--glucose-1-phosphate uridylyltransferase (473 aa).

UTP-binding positions include 89 to 92 (LNGG), Lys103, Gln166, and Gly195. 91-92 (GG) is a substrate binding site. Substrate is bound by residues His196 and 224–226 (NSD). Asp226 and Lys364 together coordinate UTP.

It belongs to the UDPGP type 1 family.

The protein resides in the cytoplasm. The enzyme catalyses alpha-D-glucose 1-phosphate + UTP + H(+) = UDP-alpha-D-glucose + diphosphate. Its function is as follows. Plays a central role as a glucosyl donor in cellular metabolic pathways. In Hordeum vulgare (Barley), this protein is UTP--glucose-1-phosphate uridylyltransferase.